The primary structure comprises 109 residues: Mannose-specific lectin (109 aa).

The Bulb-type lectin domain maps to 1-109; that stretch reads DNILYSSEVL…PPIWATGTGR (109 aa). Cysteines 29 and 52 form a disulfide. Residues 79–82 constitute a propeptide that is removed on maturation; that stretch reads TGTN.

Homotrimer or homotetramer.

The protein localises to the secreted. Mannose-specific lectin. Shows agglutinating activity toward rabbit erythrocytes and mitogenic activity towards mouse lymphocytes. The polypeptide is Mannose-specific lectin (Aloe arborescens (Kidachi aloe)).